Here is a 159-residue protein sequence, read N- to C-terminus: Phosphopantetheine adenylyltransferase (159 aa).

Residue S9 coordinates substrate. ATP contacts are provided by residues 9-10 and H17; that span reads SF. Substrate-binding residues include K41, L73, and R87. ATP-binding positions include 88–90, E98, and 123–129; these read GLR and YSYVSSS.

This sequence belongs to the bacterial CoaD family. As to quaternary structure, homohexamer. Requires Mg(2+) as cofactor.

The protein localises to the cytoplasm. It carries out the reaction (R)-4'-phosphopantetheine + ATP + H(+) = 3'-dephospho-CoA + diphosphate. It functions in the pathway cofactor biosynthesis; coenzyme A biosynthesis; CoA from (R)-pantothenate: step 4/5. Its function is as follows. Reversibly transfers an adenylyl group from ATP to 4'-phosphopantetheine, yielding dephospho-CoA (dPCoA) and pyrophosphate. In Shouchella clausii (strain KSM-K16) (Alkalihalobacillus clausii), this protein is Phosphopantetheine adenylyltransferase.